The sequence spans 142 residues: DNA-directed RNA polymerase II subunit RPB4 (142 aa).

This sequence belongs to the eukaryotic RPB4 RNA polymerase subunit family. As to quaternary structure, component of the RNA polymerase II (Pol II) core complex consisting of 12 subunits: a ten-subunit catalytic core composed of POLR2A/RPB1, POLR2B/RPB2, POLR2C/RPB3, POLR2I/RPB9, POLR2J/RPB11, POLR2E/RPABC1, POLR2F/RPABC2, POLR2H/RPABC3, POLR2K/RPABC4 and POLR2L/RPABC5 and a mobile stalk composed of two subunits POLR2D/RPB4 and POLR2G/RPB7, protruding from the core and functioning primarily in transcription initiation. Part of Pol II(G) complex, in which Pol II core associates with an additional subunit POLR2M; unlike conventional Pol II, Pol II(G) functions as a transcriptional repressor. Part of Pol II pre-initiation complex (PIC), in which Pol II core assembles with Mediator, general transcription factors and other specific initiation factors including GTF2E1, GTF2E2, GTF2F1, GTF2F2, TCEA1, ERCC2, ERCC3, GTF2H2, GTF2H3, GTF2H4, GTF2H5, GTF2A1, GTF2A2, GTF2B and TBP; this large multi-subunit PIC complex mediates DNA unwinding and targets Pol II core to the transcription start site where the first phosphodiester bond forms.

It is found in the nucleus. Core component of RNA polymerase II (Pol II), a DNA-dependent RNA polymerase which synthesizes mRNA precursors and many functional non-coding RNAs using the four ribonucleoside triphosphates as substrates. Pol II is the central component of the basal RNA polymerase II transcription machinery. It is composed of mobile elements that move relative to each other. POLR2D/RPB4 is part of a subcomplex with POLR2G/RPB7 that binds to a pocket formed by POLR2A/RPB1, POLR2B/RPB2 and POLR2F/RPABC2 at the base of the clamp element. The POLR2D/RPB4-POLR2G/RPB7 subcomplex seems to lock the clamp via POLR2G/RPB7 in the closed conformation thus preventing double-stranded DNA to enter the active site cleft. The POLR2D/RPB4-POLR2G/RPB7 subcomplex binds single-stranded DNA and RNA. This is DNA-directed RNA polymerase II subunit RPB4 (POLR2D) from Bos taurus (Bovine).